A 499-amino-acid chain; its full sequence is L-asparagine permease (499 aa).

12 helical membrane-spanning segments follow: residues 34 to 54 (QVQM…GAGA), 58 to 78 (MAGP…FFIL), 109 to 129 (VAGW…ITAV), 146 to 166 (VFAL…VKWF), 171 to 191 (FWFA…GTVF), 219 to 239 (LLPA…IEMV), 264 to 284 (IGLF…WSAY), 298 to 318 (LGVP…ALSS), 353 to 373 (YAGI…NYLV), 378 to 398 (FEIV…FIIV), 422 to 442 (APFT…LMAF), and 448 to 468 (TYTI…WFGV).

The protein belongs to the amino acid-polyamine-organocation (APC) superfamily. Amino acid transporter (AAT) (TC 2.A.3.1) family.

Its subcellular location is the cell inner membrane. In Escherichia coli (strain K12), this protein is L-asparagine permease (ansP).